We begin with the raw amino-acid sequence, 364 residues long: DNA replication and repair protein RecF (364 aa).

Position 30–37 (30–37 (GNNGQGKT)) interacts with ATP.

It belongs to the RecF family.

It is found in the cytoplasm. The RecF protein is involved in DNA metabolism; it is required for DNA replication and normal SOS inducibility. RecF binds preferentially to single-stranded, linear DNA. It also seems to bind ATP. This is DNA replication and repair protein RecF from Geobacter sp. (strain M21).